The sequence spans 204 residues: Holliday junction branch migration complex subunit RuvA (204 aa).

The tract at residues 1 to 67 is domain I; that stretch reads MIAFLSGHLV…ETELVLYGFG (67 aa). Positions 68-146 are domain II; sequence SPAERDVFVE…HWRQGLENAD (79 aa). The segment at 147-156 is flexible linker; the sequence is RPLAGGPPPA. The domain III stretch occupies residues 156 to 204; it reads AIREEVEMALLALGYSLQEIQAALQALPSQPRPTEEWLRDAITYLSRQP.

The protein belongs to the RuvA family. Homotetramer. Forms an RuvA(8)-RuvB(12)-Holliday junction (HJ) complex. HJ DNA is sandwiched between 2 RuvA tetramers; dsDNA enters through RuvA and exits via RuvB. An RuvB hexamer assembles on each DNA strand where it exits the tetramer. Each RuvB hexamer is contacted by two RuvA subunits (via domain III) on 2 adjacent RuvB subunits; this complex drives branch migration. In the full resolvosome a probable DNA-RuvA(4)-RuvB(12)-RuvC(2) complex forms which resolves the HJ.

It is found in the cytoplasm. Functionally, the RuvA-RuvB-RuvC complex processes Holliday junction (HJ) DNA during genetic recombination and DNA repair, while the RuvA-RuvB complex plays an important role in the rescue of blocked DNA replication forks via replication fork reversal (RFR). RuvA specifically binds to HJ cruciform DNA, conferring on it an open structure. The RuvB hexamer acts as an ATP-dependent pump, pulling dsDNA into and through the RuvAB complex. HJ branch migration allows RuvC to scan DNA until it finds its consensus sequence, where it cleaves and resolves the cruciform DNA. The protein is Holliday junction branch migration complex subunit RuvA of Synechococcus sp. (strain JA-3-3Ab) (Cyanobacteria bacterium Yellowstone A-Prime).